The primary structure comprises 724 residues: Methionine--tRNA ligase (724 aa).

The short motif at 11–21 is the 'HIGH' region element; that stretch reads PYANGPIHAGH. Zn(2+) contacts are provided by Cys-143, Cys-146, Cys-156, and Cys-159. A 'KMSKS' region motif is present at residues 344-348; it reads KFSTS. An ATP-binding site is contributed by Thr-347. A tRNA-binding domain is found at 624-724; sequence EFSKIDLRIG…KEVKLGAKVR (101 aa).

The protein belongs to the class-I aminoacyl-tRNA synthetase family. MetG type 1 subfamily. As to quaternary structure, homodimer. Zn(2+) serves as cofactor.

The protein localises to the cytoplasm. The enzyme catalyses tRNA(Met) + L-methionine + ATP = L-methionyl-tRNA(Met) + AMP + diphosphate. Functionally, is required not only for elongation of protein synthesis but also for the initiation of all mRNA translation through initiator tRNA(fMet) aminoacylation. The chain is Methionine--tRNA ligase from Pyrococcus furiosus (strain ATCC 43587 / DSM 3638 / JCM 8422 / Vc1).